Consider the following 473-residue polypeptide: Ribulose bisphosphate carboxylase large chain 1 (473 aa).

Positions 116 and 166 each coordinate substrate. Lysine 168 (proton acceptor) is an active-site residue. Lysine 170 serves as a coordination point for substrate. Residues lysine 194, aspartate 196, and glutamate 197 each contribute to the Mg(2+) site. Lysine 194 carries the N6-carboxylysine modification. Histidine 287 (proton acceptor) is an active-site residue. Residues arginine 288, histidine 320, and serine 372 each contribute to the substrate site.

It belongs to the RuBisCO large chain family. Type I subfamily. As to quaternary structure, heterohexadecamer of 8 large chains and 8 small chains. The cofactor is Mg(2+).

It catalyses the reaction 2 (2R)-3-phosphoglycerate + 2 H(+) = D-ribulose 1,5-bisphosphate + CO2 + H2O. The catalysed reaction is D-ribulose 1,5-bisphosphate + O2 = 2-phosphoglycolate + (2R)-3-phosphoglycerate + 2 H(+). Its function is as follows. RuBisCO catalyzes two reactions: the carboxylation of D-ribulose 1,5-bisphosphate, the primary event in carbon dioxide fixation, as well as the oxidative fragmentation of the pentose substrate. Both reactions occur simultaneously and in competition at the same active site. This chain is Ribulose bisphosphate carboxylase large chain 1, found in Acidithiobacillus ferrooxidans (strain ATCC 23270 / DSM 14882 / CIP 104768 / NCIMB 8455) (Ferrobacillus ferrooxidans (strain ATCC 23270)).